A 285-amino-acid chain; its full sequence is MSNVLKGKPVADKISEGLIQEVEVLKEKGITPKLAILRVGARGDDLAYEKGALSRCAKIGIDTEVKEFPEDITQEDFIEALRKTNGDPSIHGILIFRPLPKQLNEDVIKYEIAAEKDIDCLSPINAAKLLEGDDTGFPPCTPMAVIEILKHYEVQMEGKKAVVLGRSMVVGKPAALLLLKENATVTICHSRTKELSSVTKEGDILVAAIGKDRFVKEDFIKEGAVVIDVGINVDAEGNMYGDVDFEGCKEKAGMITPVPAGVGSVTTSILAKHVLKACRLQHNIY.

NADP(+) contacts are provided by residues 165 to 167 (GRS), serine 190, and isoleucine 231.

It belongs to the tetrahydrofolate dehydrogenase/cyclohydrolase family. In terms of assembly, homodimer.

The enzyme catalyses (6R)-5,10-methylene-5,6,7,8-tetrahydrofolate + NADP(+) = (6R)-5,10-methenyltetrahydrofolate + NADPH. The catalysed reaction is (6R)-5,10-methenyltetrahydrofolate + H2O = (6R)-10-formyltetrahydrofolate + H(+). The protein operates within one-carbon metabolism; tetrahydrofolate interconversion. Catalyzes the oxidation of 5,10-methylenetetrahydrofolate to 5,10-methenyltetrahydrofolate and then the hydrolysis of 5,10-methenyltetrahydrofolate to 10-formyltetrahydrofolate. The sequence is that of Bifunctional protein FolD from Alkaliphilus oremlandii (strain OhILAs) (Clostridium oremlandii (strain OhILAs)).